We begin with the raw amino-acid sequence, 382 residues long: G2/mitotic-specific cyclin-B2 (382 aa).

The span at 1–12 shows a compositional bias: polar residues; it reads MSSVEAVTQQQL. Residues 1–78 are disordered; that stretch reads MSSVEAVTQQ…HTSAGDPAPI (78 aa). Residues 38–47 show a composition bias toward low complexity; it reads NRNAAAAANR.

Belongs to the cyclin family. Cyclin AB subfamily. In terms of assembly, interacts with the CDK1 protein kinase to form a serine/threonine kinase holoenzyme complex also known as maturation promoting factor (MPF). The cyclin subunit imparts substrate specificity to the complex.

In terms of biological role, essential for the control of the cell cycle at the G2/M (mitosis) transition. This Oryzias javanicus (Javanese ricefish) protein is G2/mitotic-specific cyclin-B2 (ccnb2).